The sequence spans 283 residues: 4-diphosphocytidyl-2-C-methyl-D-erythritol kinase (283 aa).

Lys-10 is a catalytic residue. Pro-99–Ser-109 serves as a coordination point for ATP. Asp-141 is a catalytic residue.

Belongs to the GHMP kinase family. IspE subfamily. As to quaternary structure, homodimer.

The enzyme catalyses 4-CDP-2-C-methyl-D-erythritol + ATP = 4-CDP-2-C-methyl-D-erythritol 2-phosphate + ADP + H(+). The protein operates within isoprenoid biosynthesis; isopentenyl diphosphate biosynthesis via DXP pathway; isopentenyl diphosphate from 1-deoxy-D-xylulose 5-phosphate: step 3/6. In terms of biological role, catalyzes the phosphorylation of the position 2 hydroxy group of 4-diphosphocytidyl-2C-methyl-D-erythritol. In Escherichia coli O7:K1 (strain IAI39 / ExPEC), this protein is 4-diphosphocytidyl-2-C-methyl-D-erythritol kinase.